We begin with the raw amino-acid sequence, 122 residues long: Large ribosomal subunit protein uL14 (122 aa).

The protein belongs to the universal ribosomal protein uL14 family. In terms of assembly, part of the 50S ribosomal subunit. Forms a cluster with proteins L3 and L19. In the 70S ribosome, L14 and L19 interact and together make contacts with the 16S rRNA in bridges B5 and B8.

In terms of biological role, binds to 23S rRNA. Forms part of two intersubunit bridges in the 70S ribosome. The polypeptide is Large ribosomal subunit protein uL14 (Lactobacillus delbrueckii subsp. bulgaricus (strain ATCC 11842 / DSM 20081 / BCRC 10696 / JCM 1002 / NBRC 13953 / NCIMB 11778 / NCTC 12712 / WDCM 00102 / Lb 14)).